Here is a 256-residue protein sequence, read N- to C-terminus: Probable hydroxyacylglutathione hydrolase glo2 (256 aa).

Residues His-63, His-65, Asp-67, His-68, His-118, and Asp-139 each coordinate Zn(2+). Substrate is bound by residues Arg-148, 178-180 (HEY), and 250-253 (RDMK). His-178 lines the Zn(2+) pocket.

It belongs to the metallo-beta-lactamase superfamily. Glyoxalase II family. The cofactor is Zn(2+).

The protein resides in the cytoplasm. It localises to the nucleus. It carries out the reaction an S-(2-hydroxyacyl)glutathione + H2O = a 2-hydroxy carboxylate + glutathione + H(+). The catalysed reaction is (R)-S-lactoylglutathione + H2O = (R)-lactate + glutathione + H(+). The protein operates within secondary metabolite metabolism; methylglyoxal degradation; (R)-lactate from methylglyoxal: step 2/2. Its function is as follows. Thiolesterase that catalyzes the hydrolysis of S-D-lactoylglutathione to form glutathione and D-lactic acid. Involved in the metabolism of methylglyoxal, a toxic compound for yeast proliferation, by converting methylglyoxal to lactate via S-D-lactoylglutathione by sequential enzyme reactions catalyzed by glyoxalase I and glyoxalase II. In Schizosaccharomyces pombe (strain 972 / ATCC 24843) (Fission yeast), this protein is Probable hydroxyacylglutathione hydrolase glo2 (glo2).